The following is a 322-amino-acid chain: Arginase-1 (322 aa).

Low complexity predominate over residues 1 to 12 (MSSKSKSIGIIG). The segment at 1–26 (MSSKSKSIGIIGAPFSKGQPRGGVEE) is disordered. Ser-7 is modified (phosphoserine). N6-succinyllysine is present on Lys-17. The residue at position 62 (Ser-62) is a Phosphoserine. Residues His-101, Asp-124, His-126, and Asp-128 each coordinate Mn(2+). Residues 126–130 (HTDIN) and 137–139 (SGN) each bind substrate. A Phosphoserine modification is found at Ser-163. Asp-183 lines the substrate pocket. Asp-232 and Asp-234 together coordinate Mn(2+). The substrate site is built by Thr-246 and Glu-277.

The protein belongs to the arginase family. As to quaternary structure, homotrimer. Interacts with CMTM6. Mn(2+) is required as a cofactor.

The protein resides in the cytoplasm. The enzyme catalyses L-arginine + H2O = urea + L-ornithine. Its pathway is nitrogen metabolism; urea cycle; L-ornithine and urea from L-arginine: step 1/1. The sequence is that of Arginase-1 (ARG1) from Oryctolagus cuniculus (Rabbit).